We begin with the raw amino-acid sequence, 878 residues long: Glycogen [starch] synthase (878 aa).

Lysine 61 serves as a coordination point for UDP-alpha-D-glucose. Disordered regions lie at residues 637–721 (PPKP…NVIP) and 746–878 (NEFK…KSLK). Low complexity-rich tracts occupy residues 641-656 (ISRSPSPSPSSSLKLS) and 666-676 (QQQQQQQQPQP). The span at 677 to 692 (IGTTINLIPPSSNVSV) shows a compositional bias: polar residues. Low complexity-rich tracts occupy residues 693-715 (TPTTTPTTTTTATTATTAPITTP), 746-781 (NEFKKQQQQQQQSKTPTTPTTTSTTTTTPSTTAAAT), 795-830 (PNTSSFIPTNKGSTATTTTTTATPTPTPSNNTNGKP), and 838-878 (TKSN…KSLK).

The protein belongs to the glycosyltransferase 3 family.

The enzyme catalyses [(1-&gt;4)-alpha-D-glucosyl](n) + UDP-alpha-D-glucose = [(1-&gt;4)-alpha-D-glucosyl](n+1) + UDP + H(+). It functions in the pathway glycan biosynthesis; glycogen biosynthesis. Its function is as follows. Catalyzes the formation of apha-1,4 glycosidic bonds adding glucose residue from UDPG to the growing chain of glycogen. This chain is Glycogen [starch] synthase (glcS), found in Dictyostelium discoideum (Social amoeba).